The primary structure comprises 299 residues: Transcription factor MYB17 (299 aa).

HTH myb-type domains are found at residues 9 to 61 and 62 to 116; these read KIGL…TNYL and RPDI…KKRL. 2 DNA-binding regions (H-T-H motif) span residues 37-61 and 89-112; these read WRTL…TNYL and WAAI…NTHL.

As to quaternary structure, interacts with LFY. In terms of tissue distribution, expressed in the shoot apex, young flower buds, developing carpels and siliques. Expressed in floral meristem, initiating floral primordia and developing flowers.

It is found in the nucleus. In terms of biological role, transcription factor that may play a role in flower development by repressing ANT. Regulates the transition of meristem identity from vegetative growth to flowering. Acts downstream of LFY and upstream of AP1. Directly activates AP1 to promote floral fate. Together with LFY and AP1 may constitute a regulatory network that contributes to an abrupt and robust meristem identity transition. This is Transcription factor MYB17 from Arabidopsis thaliana (Mouse-ear cress).